We begin with the raw amino-acid sequence, 541 residues long: 2-succinyl-5-enolpyruvyl-6-hydroxy-3-cyclohexene-1-carboxylate synthase (541 aa).

This sequence belongs to the TPP enzyme family. MenD subfamily. Homodimer. It depends on Mg(2+) as a cofactor. Mn(2+) is required as a cofactor. The cofactor is thiamine diphosphate.

The enzyme catalyses isochorismate + 2-oxoglutarate + H(+) = 5-enolpyruvoyl-6-hydroxy-2-succinyl-cyclohex-3-ene-1-carboxylate + CO2. Its pathway is quinol/quinone metabolism; 1,4-dihydroxy-2-naphthoate biosynthesis; 1,4-dihydroxy-2-naphthoate from chorismate: step 2/7. The protein operates within quinol/quinone metabolism; menaquinone biosynthesis. In terms of biological role, catalyzes the thiamine diphosphate-dependent decarboxylation of 2-oxoglutarate and the subsequent addition of the resulting succinic semialdehyde-thiamine pyrophosphate anion to isochorismate to yield 2-succinyl-5-enolpyruvyl-6-hydroxy-3-cyclohexene-1-carboxylate (SEPHCHC). The protein is 2-succinyl-5-enolpyruvyl-6-hydroxy-3-cyclohexene-1-carboxylate synthase of Leuconostoc citreum (strain KM20).